Here is an 866-residue protein sequence, read N- to C-terminus: Paramyosin (866 aa).

Residues 1-22 are nonhelical region; that stretch reads MMNHDTESHVKISRTIYRGVSP. A coiled-coil region spans residues 23–839; the sequence is STTRLESRVR…AERTVTVRRV (817 aa). Residues 840-866 are nonhelical region; it reads GPGGRAVSVARELSVTSNRGMRATSMM.

This sequence belongs to the paramyosin family. As to quaternary structure, homodimer.

It is found in the cytoplasm. The protein resides in the myofibril. Paramyosin is a major structural component of many thick filaments isolated from invertebrate muscles. This Schistosoma japonicum (Blood fluke) protein is Paramyosin.